A 111-amino-acid chain; its full sequence is Large ribosomal subunit protein uL22 (111 aa).

The protein belongs to the universal ribosomal protein uL22 family. As to quaternary structure, part of the 50S ribosomal subunit.

In terms of biological role, this protein binds specifically to 23S rRNA; its binding is stimulated by other ribosomal proteins, e.g. L4, L17, and L20. It is important during the early stages of 50S assembly. It makes multiple contacts with different domains of the 23S rRNA in the assembled 50S subunit and ribosome. The globular domain of the protein is located near the polypeptide exit tunnel on the outside of the subunit, while an extended beta-hairpin is found that lines the wall of the exit tunnel in the center of the 70S ribosome. This is Large ribosomal subunit protein uL22 from Thermoanaerobacter pseudethanolicus (strain ATCC 33223 / 39E) (Clostridium thermohydrosulfuricum).